The primary structure comprises 234 residues: Purine nucleoside phosphorylase DeoD-type (234 aa).

Histidine 5 contacts a purine D-ribonucleoside. Phosphate is bound by residues glycine 21, arginine 25, arginine 44, and 88-91; that span reads RVGT. Residues 178–180 and 202–203 each bind a purine D-ribonucleoside; these read EME and SD. The active-site Proton donor is aspartate 203.

This sequence belongs to the PNP/UDP phosphorylase family. As to quaternary structure, homohexamer; trimer of homodimers.

It catalyses the reaction a purine D-ribonucleoside + phosphate = a purine nucleobase + alpha-D-ribose 1-phosphate. The catalysed reaction is a purine 2'-deoxy-D-ribonucleoside + phosphate = a purine nucleobase + 2-deoxy-alpha-D-ribose 1-phosphate. Its function is as follows. Catalyzes the reversible phosphorolytic breakdown of the N-glycosidic bond in the beta-(deoxy)ribonucleoside molecules, with the formation of the corresponding free purine bases and pentose-1-phosphate. This chain is Purine nucleoside phosphorylase DeoD-type, found in Lactococcus lactis subsp. cremoris (strain MG1363).